A 663-amino-acid polypeptide reads, in one-letter code: Sodium/potassium/calcium exchanger 1 (663 aa).

Residues 32 to 128 lie on the Extracellular side of the membrane; the sequence is SPSAIPALLT…DLFSVEERRQ (97 aa). N-linked (GlcNAc...) asparagine glycosylation is found at N59, N66, and N100. A helical transmembrane segment spans residues 129 to 149; it reads GWVVLHIFGMMYVFVALAIVC. The Cytoplasmic segment spans residues 150-173; that stretch reads DEYFVPALGVITEKLQISEDVAGA. The Alpha-1 repeat unit spans residues 170 to 210; the sequence is VAGATFMAAGGSAPELFTSLIGVFISHSNVGIGTIVGSAVF. Residues 174–194 form a helical membrane-spanning segment; that stretch reads TFMAAGGSAPELFTSLIGVFI. Over 195–200 the chain is Extracellular; sequence SHSNVG. A helical transmembrane segment spans residues 201-221; sequence IGTIVGSAVFNILFVIGTCAL. Over 222-228 the chain is Cytoplasmic; the sequence is FSREILH. Residues 229–253 form a helical membrane-spanning segment; that stretch reads LTWWPLFRDISFYIVDLLMLILFFL. Topologically, residues 254 to 259 are extracellular; it reads DSVIDW. The chain crosses the membrane as a helical span at residues 260 to 276; the sequence is WESLLLLTAYATYVFTM. The Cytoplasmic segment spans residues 277–471; the sequence is KHNVSLEQWV…SLEWPETRKK (195 aa). Disordered regions lie at residues 308 to 343 and 384 to 465; these read KSSV…SLHN and LTGQ…SLEW. Over residues 316–325 the composition is skewed to basic and acidic residues; sequence DGTKPADGKK. Composition is skewed to polar residues over residues 327–343 and 399–412; these read QPTT…SLHN and ASQN…ASDS. Position 337 is a phosphoserine (S337). Residues 413–423 show a composition bias toward basic and acidic residues; the sequence is EPSKDKQKEDT. Acidic residues predominate over residues 434–461; that stretch reads DNSEDSSSDSEDDSDDDSTDDEENDEPL. Residues 472 to 492 form a helical membrane-spanning segment; the sequence is QAIYLFLFPIVFPLWSTIPDV. Residues 493 to 499 are Extracellular-facing; it reads RNPDSKK. Residues 500 to 520 form a helical membrane-spanning segment; that stretch reads FFVITFFGSIIWIAAFSYLMV. Residues 521–535 lie on the Cytoplasmic side of the membrane; it reads WWAHQVGETIGISEE. The helical transmembrane segment at 536–556 threads the bilayer; that stretch reads IMGLTILAAGTSIPDLITSVI. One copy of the Alpha-2 repeat lies at 543–574; the sequence is AAGTSIPDLITSVIVARKGLGDMAVSSSVGSN. The Extracellular portion of the chain corresponds to 557–574; it reads VARKGLGDMAVSSSVGSN. Residues 575-595 form a helical membrane-spanning segment; that stretch reads IFDITVGLPVPWFLYSVFNGF. Topologically, residues 596-604 are cytoplasmic; sequence SPVAVSSNG. The chain crosses the membrane as a helical span at residues 605–625; sequence LFCAIVLLFLMLLFVIISIAL. Residues 626–632 lie on the Extracellular side of the membrane; it reads CKWKMNK. The helical transmembrane segment at 633–653 threads the bilayer; the sequence is ILGVTMFALYFVFLIISVMLE. The Cytoplasmic segment spans residues 654-663; sequence DRIISCPVSV.

The protein belongs to the Ca(2+):cation antiporter (CaCA) (TC 2.A.19) family. SLC24A subfamily. The uncleaved signal sequence is required for efficient membrane targeting and proper membrane integration and topology. In terms of tissue distribution, retinal rods. Localizes to the inner segment of rod photoreceptors.

Its subcellular location is the cell membrane. The catalysed reaction is Ca(2+)(out) + K(+)(out) + 4 Na(+)(in) = Ca(2+)(in) + K(+)(in) + 4 Na(+)(out). Functionally, calcium, potassium:sodium antiporter that transports 1 Ca(2+) and 1 K(+) in exchange for 4 Na(+). Critical component of the visual transduction cascade, controlling the calcium concentration of outer segments during light and darkness. Light causes a rapid lowering of cytosolic free calcium in the outer segment of both retinal rod and cone photoreceptors and the light-induced lowering of calcium is caused by extrusion via this protein which plays a key role in the process of light adaptation. The polypeptide is Sodium/potassium/calcium exchanger 1 (SLC24A1) (Gallus gallus (Chicken)).